Here is a 207-residue protein sequence, read N- to C-terminus: Sodium/potassium-transporting ATPase subunit beta-1-interacting protein 1 (207 aa).

3 helical membrane-spanning segments follow: residues 2–22 (GRCS…AAAL), 35–55 (APIL…LGTL), and 62–82 (LILY…IICF). A glycan (N-linked (GlcNAc...) asparagine) is linked at N100. A helical transmembrane segment spans residues 147–167 (ALSSALQIFLALFGFVYACYV).

The protein belongs to the NKAIN family. Interacts with atp1b1 C-terminus.

The protein localises to the cell membrane. This Xenopus laevis (African clawed frog) protein is Sodium/potassium-transporting ATPase subunit beta-1-interacting protein 1 (nkain1).